The primary structure comprises 148 residues: Putative pre-16S rRNA nuclease (148 aa).

This sequence belongs to the YqgF nuclease family.

The protein localises to the cytoplasm. In terms of biological role, could be a nuclease involved in processing of the 5'-end of pre-16S rRNA. The chain is Putative pre-16S rRNA nuclease from Nitrosomonas europaea (strain ATCC 19718 / CIP 103999 / KCTC 2705 / NBRC 14298).